The sequence spans 1040 residues: Multidrug resistance protein MdtB (1040 aa).

The next 12 helical transmembrane spans lie at 25–45, 347–367, 369–389, 396–416, 440–460, 472–492, 537–557, 863–883, 888–908, 910–930, 968–988, and 998–1018; these read LLMA…PVAA, LMLA…NIPA, IIPG…MVFL, LTLM…IVVI, IGFT…PLLF, FAVT…TLTP, WLTL…WIVI, LGST…VLGV, FIHP…ALLA, IIAG…LIGI, ILMT…STGV, and IAMV…TPVI.

It belongs to the resistance-nodulation-cell division (RND) (TC 2.A.6) family. MdtB subfamily. Part of a tripartite efflux system composed of MdtA, MdtB and MdtC. MdtB forms a heteromultimer with MdtC.

It localises to the cell inner membrane. The polypeptide is Multidrug resistance protein MdtB (Salmonella dublin (strain CT_02021853)).